Consider the following 454-residue polypeptide: Bifunctional protein GlmU (454 aa).

The tract at residues 1–226 is pyrophosphorylase; the sequence is MSLNVVILAA…AIEVEGANNR (226 aa). UDP-N-acetyl-alpha-D-glucosamine-binding positions include 8-11, lysine 22, glutamine 73, 78-79, 100-102, glycine 137, glutamate 151, asparagine 166, and asparagine 224; these read LAAG, GT, and YGD. Aspartate 102 is a Mg(2+) binding site. Residue asparagine 224 coordinates Mg(2+). The segment at 227 to 247 is linker; the sequence is VQLAQLERAYQARAAEKMMLE. The segment at 248–454 is N-acetyltransferase; sequence GANLRDPARI…GWQRPIKIKK (207 aa). Residues arginine 330 and lysine 348 each coordinate UDP-N-acetyl-alpha-D-glucosamine. Residue histidine 360 is the Proton acceptor of the active site. Residues tyrosine 363 and asparagine 374 each coordinate UDP-N-acetyl-alpha-D-glucosamine. Residues alanine 377, 383–384, serine 402, alanine 420, and arginine 437 each bind acetyl-CoA; that span reads NY.

It in the N-terminal section; belongs to the N-acetylglucosamine-1-phosphate uridyltransferase family. The protein in the C-terminal section; belongs to the transferase hexapeptide repeat family. Homotrimer. Mg(2+) is required as a cofactor.

The protein resides in the cytoplasm. The catalysed reaction is alpha-D-glucosamine 1-phosphate + acetyl-CoA = N-acetyl-alpha-D-glucosamine 1-phosphate + CoA + H(+). The enzyme catalyses N-acetyl-alpha-D-glucosamine 1-phosphate + UTP + H(+) = UDP-N-acetyl-alpha-D-glucosamine + diphosphate. It participates in nucleotide-sugar biosynthesis; UDP-N-acetyl-alpha-D-glucosamine biosynthesis; N-acetyl-alpha-D-glucosamine 1-phosphate from alpha-D-glucosamine 6-phosphate (route II): step 2/2. The protein operates within nucleotide-sugar biosynthesis; UDP-N-acetyl-alpha-D-glucosamine biosynthesis; UDP-N-acetyl-alpha-D-glucosamine from N-acetyl-alpha-D-glucosamine 1-phosphate: step 1/1. Its pathway is bacterial outer membrane biogenesis; LPS lipid A biosynthesis. Its function is as follows. Catalyzes the last two sequential reactions in the de novo biosynthetic pathway for UDP-N-acetylglucosamine (UDP-GlcNAc). The C-terminal domain catalyzes the transfer of acetyl group from acetyl coenzyme A to glucosamine-1-phosphate (GlcN-1-P) to produce N-acetylglucosamine-1-phosphate (GlcNAc-1-P), which is converted into UDP-GlcNAc by the transfer of uridine 5-monophosphate (from uridine 5-triphosphate), a reaction catalyzed by the N-terminal domain. The chain is Bifunctional protein GlmU from Shewanella frigidimarina (strain NCIMB 400).